A 105-amino-acid chain; its full sequence is UPF0473 protein SAK_2028 (105 aa).

It belongs to the UPF0473 family.

The chain is UPF0473 protein SAK_2028 from Streptococcus agalactiae serotype Ia (strain ATCC 27591 / A909 / CDC SS700).